Consider the following 90-residue polypeptide: Mitochondrial import inner membrane translocase subunit Tim10 (90 aa).

The Twin CX3C motif signature appears at 29 to 54 (CHRKCVPPHYKEAELSKGESVCLDRC). 2 disulfides stabilise this stretch: C29-C54 and C33-C50.

It belongs to the small Tim family. In terms of assembly, heterohexamer; composed of 3 copies of TIMM9 and 3 copies of TIMM10/TIM10A, named soluble 70 kDa complex. The complex forms a 6-bladed alpha-propeller structure and associates with the TIMM22 component of the TIM22 complex. Interacts with multi-pass transmembrane proteins in transit. Also forms a complex composed of TIMM9, TIMM10/TIM10A and FXC1/TIM10B.

It localises to the mitochondrion inner membrane. Functionally, mitochondrial intermembrane chaperone that participates in the import and insertion of multi-pass transmembrane proteins into the mitochondrial inner membrane. May also be required for the transfer of beta-barrel precursors from the TOM complex to the sorting and assembly machinery (SAM complex) of the outer membrane. Acts as a chaperone-like protein that protects the hydrophobic precursors from aggregation and guide them through the mitochondrial intermembrane space. In Rattus norvegicus (Rat), this protein is Mitochondrial import inner membrane translocase subunit Tim10 (Timm10).